A 144-amino-acid chain; its full sequence is 3-dehydroquinate dehydratase (144 aa).

Residue Tyr-24 is the Proton acceptor of the active site. Asn-76, His-82, and Asp-89 together coordinate substrate. The active-site Proton donor is the His-102. Substrate is bound by residues Leu-103–Ser-104 and Arg-113.

It belongs to the type-II 3-dehydroquinase family. As to quaternary structure, homododecamer.

The enzyme catalyses 3-dehydroquinate = 3-dehydroshikimate + H2O. It participates in metabolic intermediate biosynthesis; chorismate biosynthesis; chorismate from D-erythrose 4-phosphate and phosphoenolpyruvate: step 3/7. Its function is as follows. Catalyzes a trans-dehydration via an enolate intermediate. This chain is 3-dehydroquinate dehydratase, found in Bordetella petrii (strain ATCC BAA-461 / DSM 12804 / CCUG 43448).